A 283-amino-acid chain; its full sequence is MKQYLDLCQRIVDEGTWIENERTGKRCLTVINADLTYDVENGVFPLVTTRKSFWKAAVAEMIGYIRGYDSAEDFRKIGTKTWDANANLNDAWLNNPHRKGDDDMGRVYGVQGRSWAKPNGEFVDQLKKIIDDLSQGIDDRGEILNFYNPGEFDMGCLRPCMYSHHFSLLGDTLYLNSTQRSCDVPLGLNFNMVQVYFLLAIVAQITGHKAGKAYHKIVNAHIYEDQLELMQSVQLKREPLQAPIFKINPEIKSLEDLETWVTMDDFEVIGYESHEAIKYPFSV.

Position 22 (arginine 22) interacts with dUMP. Catalysis depends on cysteine 160, which acts as the Nucleophile. DUMP contacts are provided by residues 180–183 (RSCD), asparagine 191, and 221–223 (HIY). Residue aspartate 183 coordinates (6R)-5,10-methylene-5,6,7,8-tetrahydrofolate. Serine 282 serves as a coordination point for (6R)-5,10-methylene-5,6,7,8-tetrahydrofolate.

This sequence belongs to the thymidylate synthase family. Bacterial-type ThyA subfamily. In terms of assembly, homodimer.

Its subcellular location is the cytoplasm. It carries out the reaction dUMP + (6R)-5,10-methylene-5,6,7,8-tetrahydrofolate = 7,8-dihydrofolate + dTMP. Its pathway is pyrimidine metabolism; dTTP biosynthesis. Its function is as follows. Catalyzes the reductive methylation of 2'-deoxyuridine-5'-monophosphate (dUMP) to 2'-deoxythymidine-5'-monophosphate (dTMP) while utilizing 5,10-methylenetetrahydrofolate (mTHF) as the methyl donor and reductant in the reaction, yielding dihydrofolate (DHF) as a by-product. This enzymatic reaction provides an intracellular de novo source of dTMP, an essential precursor for DNA biosynthesis. In Aliivibrio fischeri (strain ATCC 700601 / ES114) (Vibrio fischeri), this protein is Thymidylate synthase.